Here is a 383-residue protein sequence, read N- to C-terminus: MKEADLITLRRQLHQIPELALQEKETHALLLKTIQGLPQTYFTIRTLPDLPTALLVKVQGRDPQRTIGYRTDIDALPVTEKTGLPFASKHSGIAHACGHDIHMTVALGILSYFAEHQPKDNLIFFFQPAEESKNGGKLAYDMGAFTGDWHIDEFYGLHDRPDLPAGTISTRLGTLFAGTTEINVDLIGKSGHAALPQNANDMIVAAASFISQIQTVVARNVGPTDSAVITFGLMRAGTIRNVIAGRAHLEGTLRGFTQQQIDFLQQRIRDIGQGIAASFNCQVKVALNQGGYYPVENNDKLTKNFIQVMKDDPDVTFVDTKPVMTGEDFGYLLNKIPGTMFWLGVNDPDSQLHAADFSPDEAALVPGVTAVVHFLEHRMLEKV.

D72 is an active-site residue. The active-site Proton acceptor is E131.

Belongs to the peptidase M20A family. N-acetyldiaminopimelate deacetylase subfamily.

It carries out the reaction N-acetyl-(2S,6S)-2,6-diaminopimelate + H2O = (2S,6S)-2,6-diaminopimelate + acetate. It participates in amino-acid biosynthesis; L-lysine biosynthesis via DAP pathway; LL-2,6-diaminopimelate from (S)-tetrahydrodipicolinate (acetylase route): step 3/3. Catalyzes the conversion of N-acetyl-diaminopimelate to diaminopimelate and acetate. The chain is N-acetyldiaminopimelate deacetylase from Lacticaseibacillus paracasei (strain ATCC 334 / BCRC 17002 / CCUG 31169 / CIP 107868 / KCTC 3260 / NRRL B-441) (Lactobacillus paracasei).